Here is a 333-residue protein sequence, read N- to C-terminus: Ketol-acid reductoisomerase (NADP(+)) (333 aa).

Residues M1–T171 enclose the KARI N-terminal Rossmann domain. NADP(+)-binding positions include Y14–Q17, R37, T42, and D72–Q75. H97 is an active-site residue. G123 contacts NADP(+). The 146-residue stretch at T172–L317 folds into the KARI C-terminal knotted domain. Mg(2+) is bound by residues D180, E184, E216, and E220. S241 provides a ligand contact to substrate.

Belongs to the ketol-acid reductoisomerase family. Requires Mg(2+) as cofactor.

It catalyses the reaction (2R)-2,3-dihydroxy-3-methylbutanoate + NADP(+) = (2S)-2-acetolactate + NADPH + H(+). The enzyme catalyses (2R,3R)-2,3-dihydroxy-3-methylpentanoate + NADP(+) = (S)-2-ethyl-2-hydroxy-3-oxobutanoate + NADPH + H(+). It participates in amino-acid biosynthesis; L-isoleucine biosynthesis; L-isoleucine from 2-oxobutanoate: step 2/4. The protein operates within amino-acid biosynthesis; L-valine biosynthesis; L-valine from pyruvate: step 2/4. Functionally, involved in the biosynthesis of branched-chain amino acids (BCAA). Catalyzes an alkyl-migration followed by a ketol-acid reduction of (S)-2-acetolactate (S2AL) to yield (R)-2,3-dihydroxy-isovalerate. In the isomerase reaction, S2AL is rearranged via a Mg-dependent methyl migration to produce 3-hydroxy-3-methyl-2-ketobutyrate (HMKB). In the reductase reaction, this 2-ketoacid undergoes a metal-dependent reduction by NADPH to yield (R)-2,3-dihydroxy-isovalerate. This chain is Ketol-acid reductoisomerase (NADP(+)), found in Xanthomonas campestris pv. campestris (strain 8004).